A 501-amino-acid polypeptide reads, in one-letter code: Type II secretion system protein E (501 aa).

Position 262-269 (Gly262–Ser269) interacts with ATP. Cys395, Cys398, Cys428, and Cys431 together coordinate Zn(2+).

Belongs to the GSP E family. In terms of assembly, forms homooligomers; most probably hexamers. Interacts with ExeL/GspL. Zn(2+) is required as a cofactor.

The protein localises to the cell inner membrane. It carries out the reaction ATP + H2O + cellular proteinSide 1 = ADP + phosphate + cellular proteinSide 2.. Its function is as follows. ATPase component of the type II secretion system required for the energy-dependent secretion of extracellular factors such as proteases and toxins from the periplasm. Acts as a molecular motor to provide the energy that is required for assembly of the pseudopilus and the extrusion of substrates generated in the cytoplasm. The chain is Type II secretion system protein E (exeE) from Aeromonas hydrophila.